Here is a 72-residue protein sequence, read N- to C-terminus: Translation initiation factor IF-1 2 (72 aa).

The 72-residue stretch at 1 to 72 folds into the S1-like domain; sequence MAKEELIEFE…TKGRINYRHK (72 aa).

It belongs to the IF-1 family. As to quaternary structure, component of the 30S ribosomal translation pre-initiation complex which assembles on the 30S ribosome in the order IF-2 and IF-3, IF-1 and N-formylmethionyl-tRNA(fMet); mRNA recruitment can occur at any time during PIC assembly.

The protein localises to the cytoplasm. In terms of biological role, one of the essential components for the initiation of protein synthesis. Stabilizes the binding of IF-2 and IF-3 on the 30S subunit to which N-formylmethionyl-tRNA(fMet) subsequently binds. Helps modulate mRNA selection, yielding the 30S pre-initiation complex (PIC). Upon addition of the 50S ribosomal subunit IF-1, IF-2 and IF-3 are released leaving the mature 70S translation initiation complex. The protein is Translation initiation factor IF-1 2 of Ralstonia nicotianae (strain ATCC BAA-1114 / GMI1000) (Ralstonia solanacearum).